We begin with the raw amino-acid sequence, 666 residues long: Protein scarlet (666 aa).

Over 1 to 417 (MSDSDSKRID…TIQWLRFIQK (417 aa)) the chain is Cytoplasmic. The interval 26–55 (PVGSTIEVPSLDSTPKLSKRNSSERSLPLR) is disordered. The 248-residue stretch at 69 to 316 (LVWRDLCVYT…FANHGYYCPE (248 aa)) folds into the ABC transporter domain. 108–115 (GSSGSGKT) is an ATP binding site. A helical transmembrane segment spans residues 418 to 438 (IAMAFIIGACFAGTTEPSQLG). The Extracellular segment spans residues 439–444 (VQAVQG). The chain crosses the membrane as a helical span at residues 445–465 (ALFIMISENTYHPMYSVLNLF). Residues 466–490 (PQGFPLFMRETRSGLYSTGQYYAAN) lie on the Cytoplasmic side of the membrane. Residues 491–511 (ILALLPGMIIEPLIFVIICYW) traverse the membrane as a helical segment. At 512 to 518 (LTGLRST) the chain is on the extracellular side. Residues 519–539 (FYAFGVTAMCVVLVMNVATAC) form a helical membrane-spanning segment. Topologically, residues 540-551 (GCFFSTAFNSVP) are cytoplasmic. A helical membrane pass occupies residues 552-572 (LAMAYLVPLDYIFMITSGIFI). The Extracellular portion of the chain corresponds to 573–639 (QVNSLPVAFW…YSFNESNVYR (67 aa)). N-linked (GlcNAc...) asparagine glycosylation is found at N607 and N633. A helical membrane pass occupies residues 640–660 (NLLAMVGLYFGFHLLGYYCLW). Topologically, residues 661–666 (RRARKL) are cytoplasmic.

This sequence belongs to the ABC transporter superfamily. ABCG family. Eye pigment precursor importer (TC 3.A.1.204) subfamily. In terms of assembly, may form a heterodimer with w/white. In terms of tissue distribution, expressed in the eye, specifically in primary pigment cells, secondary pigment cells and retinula cells (at protein level).

The protein localises to the cytoplasmic vesicle membrane. The catalysed reaction is L-kynurenine(out) + ATP + H2O = L-kynurenine(in) + ADP + phosphate + H(+). Functionally, ATP-dependent transporter of the ATP-binding cassette (ABC) family which transports various molecules including bioamines, neurotransmitters and metabolic intermediates. In the eye and probably in association with w/white, required for the transport of the eye brown pigment precursors, kynurenine and probably tryptophan, into pigment cell granules. In Malpighian tubules and pupal eyes, involved in kynurenine transport. Probably in association with w/white, plays a role in zinc storage granule biogenesis in Malpighian tubule principal epithelial cells. In Drosophila melanogaster (Fruit fly), this protein is Protein scarlet.